Here is a 495-residue protein sequence, read N- to C-terminus: Neuronal acetylcholine receptor subunit beta-4 (495 aa).

Positions 1-20 (MRGTPLLLVSLFSLLQDGDC) are cleaved as a signal peptide. Topologically, residues 21-235 (RLANAEEKLM…IIKRKPLFYT (215 aa)) are extracellular. N35, N92, N137, and N165 each carry an N-linked (GlcNAc...) asparagine glycan. C152 and C166 are oxidised to a cystine. Residues 236–256 (INLIIPCVLITSLAILVFYLP) form a helical membrane-spanning segment. Residues 257 to 264 (SDCGEKMT) are Cytoplasmic-facing. E261 is a binding site for Na(+). The helical transmembrane segment at 265–285 (LCISVLLALTFFLLLISKIVP) threads the bilayer. The Extracellular portion of the chain corresponds to 286-297 (PTSLDIPLIGKY). Residues 298 to 318 (LLFTMVLVTFSIVTTVCVLNV) traverse the membrane as a helical segment. Topologically, residues 319–463 (HHRSPSTHTM…WKFVAMVVDR (145 aa)) are cytoplasmic. Residues 464 to 484 (LFLWVFVFVCILGTMGLFLPP) form a helical membrane-spanning segment. At 485–495 (LFQIHAPSKDS) the chain is on the extracellular side.

Belongs to the ligand-gated ion channel (TC 1.A.9) family. Acetylcholine receptor (TC 1.A.9.1) subfamily. Beta-4/CHRNB4 sub-subfamily. Neuronal AChR is composed of two different types of subunits: alpha and beta. CHRNB4/Beta-4 subunit can be combined to CHRNA2/alpha-2, CHRNA3/alpha-3 or CHRNA4/alpha-4, CHRNA5/alpha-5 and CHRNB3/beta-3 to give rise to functional receptors. Forms stoichiometries such as (CHRNA3)2:(CHRNB4)3 or (CHRNA3:CHRNB4)2:CHRNB3. Interacts with RIC3; which is required for proper folding and assembly. Interacts with LYPD6. In the brain, it is detected in the medial habenula. In the peripheral nervous system, it is found at least in the adrenal gland.

Its subcellular location is the synaptic cell membrane. It localises to the cell membrane. The catalysed reaction is Ca(2+)(in) = Ca(2+)(out). It carries out the reaction K(+)(in) = K(+)(out). The enzyme catalyses Na(+)(in) = Na(+)(out). With respect to regulation, activated by a myriad of ligands such as acetylcholine, cytisine, nicotine, choline and epibatidine. nAChR activity is inhibited by the antagonist alpha-conotoxins BuIA and MII, small disulfide-constrained peptides from cone snails. The heteropentamer CHRNA3:CHRNB4 activity is blocked by the alpha-conotoxin ImI and AuIB. Component of neuronal acetylcholine receptors (nAChRs) that function as pentameric, ligand-gated cation channels with high calcium permeability among other activities. nAChRs are excitatory neurotrasnmitter receptors formed by a collection of nAChR subunits known to mediate synaptic transmission in the nervous system and the neuromuscular junction. Each nAchR subunit confers differential attributes to channel properties, including activation, deactivation and desensitization kinetics, pH sensitivity, cation permeability, and binding to allosteric modulators. CHRNB4 forms heteropentameric neuronal acetylcholine receptors with CHRNA2, CHRNA3 and CHRNA4, as well as CHRNA5 and CHRNB3 as accesory subunits. CHRNA3:CHRNB4 being predominant in neurons of the autonomic ganglia, it is known as ganglionic nicotinic receptor. CHRNA3:CHRNB4 or CHRNA3:CHRNA5:CHRNB4 play also an important role in the habenulo-interpeduncular tract, modulating the mesolimbic dopamine system and affecting reward circuits and addiction. Hypothalamic CHRNA3:CHRNB4 nAChR activation by nicotine leads to activation of POMC neurons and a decrease in food intake. The protein is Neuronal acetylcholine receptor subunit beta-4 (Chrnb4) of Rattus norvegicus (Rat).